The primary structure comprises 97 residues: Transcription and mRNA export factor SUS1 (97 aa).

It belongs to the ENY2 family. As to quaternary structure, component of the nuclear pore complex (NPC)-associated TREX-2 complex (transcription and export complex 2), composed of at least SUS1, SAC3, THP1, SEM1, and CDC31. TREX-2 contains 2 SUS1 chains. The TREX-2 complex interacts with the nucleoporin NUP1. Component of the 1.8 MDa SAGA transcription coactivator-HAT complex. SAGA is built of 5 distinct domains with specialized functions. Within the SAGA complex, SUS1, SGF11, SGF73 and UBP8 form an additional subcomplex of SAGA called the DUB module (deubiquitination module). Interacts directly with THP1, SAC3, SGF11, and with the RNA polymerase II.

The protein localises to the nucleus. It localises to the nucleoplasm. Its subcellular location is the cytoplasm. It is found in the P-body. Functionally, involved in mRNA export coupled transcription activation by association with both the TREX-2 and the SAGA complexes. At the promoters, SAGA is required for recruitment of the basal transcription machinery. It influences RNA polymerase II transcriptional activity through different activities such as TBP interaction and promoter selectivity, interaction with transcription activators, and chromatin modification through histone acetylation and deubiquitination. Within the SAGA complex, participates in a subcomplex required for deubiquitination of H2B and for the maintenance of steady-state H3 methylation levels. The TREX-2 complex functions in docking export-competent ribonucleoprotein particles (mRNPs) to the nuclear entrance of the nuclear pore complex (nuclear basket). TREX-2 participates in mRNA export and accurate chromatin positioning in the nucleus by tethering genes to the nuclear periphery. May also be involved in cytoplasmic mRNA decay by interaction with components of P-bodies. The sequence is that of Transcription and mRNA export factor SUS1 from Meyerozyma guilliermondii (strain ATCC 6260 / CBS 566 / DSM 6381 / JCM 1539 / NBRC 10279 / NRRL Y-324) (Yeast).